The sequence spans 215 residues: ER lumen protein-retaining receptor 3 (215 aa).

At 1 to 4 the chain is on the lumenal side; sequence MNIF. A helical membrane pass occupies residues 5–24; sequence RLSGDVCHLIAIIILFLKIW. The Cytoplasmic segment spans residues 25 to 32; it reads RSKSCAGI. The chain crosses the membrane as a helical span at residues 33–52; sequence SGKSQVLFALVFTTRYLDLF. The interval 47–48 is interaction with the K-D-E-L motif on target proteins; the sequence is RY. At 53–58 the chain is on the lumenal side; that stretch reads TSYISA. Residues 59–79 form a helical membrane-spanning segment; sequence YNTVMKVVYLLLAYSTVGLIF. Residues 80–92 are Cytoplasmic-facing; it reads FRFRNSYDSESDS. A helical transmembrane segment spans residues 93-110; sequence FRVEFLLVPVAGLSFLEN. Topologically, residues 111-116 are lumenal; sequence YAFTPL. Residues 117–135 traverse the membrane as a helical segment; that stretch reads EILWTFSIYLESVAILPQL. At 136–149 the chain is on the cytoplasmic side; the sequence is FMITKTGEAESITA. Residues 150-168 form a helical membrane-spanning segment; sequence HYLLFLGLYRALYLANWLW. Residues 159–169 are interaction with the K-D-E-L motif on target proteins; that stretch reads RALYLANWLWR. Residues 169–178 lie on the Lumenal side of the membrane; that stretch reads RFHTEGFYDQ. The chain crosses the membrane as a helical span at residues 179–199; that stretch reads IAVVSGVVQTIFYCDFFYLYF. Residues 200–215 lie on the Cytoplasmic side of the membrane; that stretch reads TRVLRGSGKMSLPMPV. The tract at residues 204–208 is important for recycling of cargo proteins with the sequence motif K-D-E-L from the Golgi to the endoplasmic reticulum; that stretch reads RGSGK.

This sequence belongs to the ERD2 family.

Its subcellular location is the endoplasmic reticulum membrane. The protein localises to the golgi apparatus membrane. It is found in the cytoplasmic vesicle. It localises to the COPI-coated vesicle membrane. Functionally, receptor for the C-terminal sequence motif K-D-E-L that is present on endoplasmic reticulum resident proteins and that mediates their recycling from the Golgi back to the endoplasmic reticulum. This chain is ER lumen protein-retaining receptor 3 (kdelr3), found in Danio rerio (Zebrafish).